Consider the following 937-residue polypeptide: Proprotein convertase subtilisin/kexin type 6 (937 aa).

Residues 1–16 show a composition bias toward pro residues; it reads MPPRAPPAPGPRPPPR. A disordered region spans residues 1-22; the sequence is MPPRAPPAPGPRPPPRAAGRHG. A signal peptide spans 1-45; it reads MPPRAPPAPGPRPPPRAAGRHGLSPLAPRPWRWLLLLALPAVCSA. Residues 46 to 132 constitute a propeptide that is removed on maturation; that stretch reads LPPPRPVYTN…QQEVKRRVKR (87 aa). One can recognise a Peptidase S8 domain in the interval 149 to 468; it reads MWYMHCADKN…FGLVDAEALV (320 aa). Catalysis depends on charge relay system residues D186 and H227. N240 carries an N-linked (GlcNAc...) asparagine glycan. Catalysis depends on S401, which acts as the Charge relay system. The 141-residue stretch at 476 to 616 folds into the P/Homo B domain; that stretch reads AVPSQHMCVA…SLILYGTAEH (141 aa). Positions 534-536 match the Cell attachment site motif; it reads RGD. Residues 621 to 656 form a disordered region; that stretch reads FSSHQSRSRMLELSVPEQEPLKAEGPPPQAETPEEE. FU repeat units follow at residues 660–707, 711–758, 762–806, 810–855, and 863–911; these read TGVC…GYFG, ARRC…GLYA, QRLC…GTYF, LIRC…GFYP, and HKVC…ETFC. The interval 680-898 is CRM (Cys-rich motif); it reads CLNCVHFSLG…GFTQLGTSCI (219 aa). N-linked (GlcNAc...) asparagine glycosylation is found at N882 and N900. Residues 899 to 937 form the PLAC domain; the sequence is TNHTCSNADETFCEMVKSNRLCERKLFIQFCCRTCLLAG.

The protein belongs to the peptidase S8 family. As to quaternary structure, the precursor protein seems to exist in the reticulum endoplasmic as both a monomer and a dimer-sized complex whereas mature form exists only as a monomer, suggesting that propeptide cleavage affects its tertiary or quaternary structure. Interacts (immature form including the propeptide) with RCN3; probably involved in the maturation and the secretion of PCSK6. The cofactor is Ca(2+). In terms of tissue distribution, high expression in the anterior pituitary and in several brain regions, the atrium, and the ventricle.

Its function is as follows. Serine endoprotease that processes various proproteins by cleavage at paired basic amino acids, recognizing the RXXX[KR]R consensus motif. Likely functions in the constitutive secretory pathway, with unique restricted distribution in both neuroendocrine and non-neuroendocrine tissues. The sequence is that of Proprotein convertase subtilisin/kexin type 6 (Pcsk6) from Rattus norvegicus (Rat).